The sequence spans 136 residues: Large ribosomal subunit protein uL13 (136 aa).

The protein belongs to the universal ribosomal protein uL13 family. As to quaternary structure, part of the 50S ribosomal subunit.

In terms of biological role, this protein is one of the early assembly proteins of the 50S ribosomal subunit, although it is not seen to bind rRNA by itself. It is important during the early stages of 50S assembly. This is Large ribosomal subunit protein uL13 from Thermoplasma volcanium (strain ATCC 51530 / DSM 4299 / JCM 9571 / NBRC 15438 / GSS1).